The chain runs to 195 residues: 2-hydroxychromene-2-carboxylate isomerase (195 aa).

Residue Ser13 is the Nucleophile of the active site. Glutathione is bound at residue Ser13. Residues Lys45 and 55 to 56 (NR) each bind substrate. Residue 181-184 (WGND) coordinates glutathione.

The protein belongs to the GST superfamily. NadH family. Glutathione is required as a cofactor.

The catalysed reaction is 2-hydroxychromene-2-carboxylate = (3E)-4-(2-hydroxyphenyl)-2-oxobut-3-enoate. With respect to regulation, activated by salicylate. Involved in the naphthalene and naphthalenesulfonate catabolic pathway. Catalyzes the reversible glutathione-dependent isomerization of 2-hydroxychromene-2-carboxylate (HCCA) to trans-O-hydroxybenzylidenepyruvate (THBPA). It can also use 2-hydroxybenzo[g]chromene-2-carboxylate as substrate. The polypeptide is 2-hydroxychromene-2-carboxylate isomerase (nsaD) (Sphingobium xenophagum).